A 236-amino-acid polypeptide reads, in one-letter code: Eukaryotic translation initiation factor 3 subunit K (236 aa).

The PCI domain occupies 48–218; that stretch reads CDCNANRTLL…EAKKAEIRED (171 aa).

The protein belongs to the eIF-3 subunit K family.

The protein resides in the cytoplasm. Its function is as follows. Component of the eukaryotic translation initiation factor 3 (eIF-3) complex, which is involved in protein synthesis of a specialized repertoire of mRNAs and, together with other initiation factors, stimulates binding of mRNA and methionyl-tRNAi to the 40S ribosome. The eIF-3 complex specifically targets and initiates translation of a subset of mRNAs involved in cell proliferation. This chain is Eukaryotic translation initiation factor 3 subunit K, found in Pyricularia oryzae (strain Y34) (Rice blast fungus).